The following is a 116-amino-acid chain: Dynein light chain Tctex-type 3 (116 aa).

Tyr4 is subject to 3'-nitrotyrosine.

This sequence belongs to the dynein light chain Tctex-type family. Homodimer. The cytoplasmic dynein 1 complex consists of two catalytic heavy chains (HCs) and a number of non-catalytic subunits presented by intermediate chains (ICs), light intermediate chains (LICs) and light chains (LCs); the composition seems to vary in respect to the IC, LIC and LC composition. The heavy chain homodimer serves as a scaffold for the probable homodimeric assembly of the respective non-catalytic subunits. The ICs and LICs bind directly to the HC dimer and the LCs assemble on the IC dimer. DYNLT1 and DYNLT3 compete for association with dynein IC (DYNC1I1 or DYNC1I2). Self-associates. Interacts with DYNC1I1 and DYNC1I2. Interacts with BUB3. Interacts with SATB1 in nucleus to form complex with matrix attachment regions (MARs) of DNA.

The protein localises to the nucleus. The protein resides in the cytoplasm. It localises to the cytoskeleton. It is found in the chromosome. Its subcellular location is the centromere. The protein localises to the kinetochore. In terms of biological role, acts as one of several non-catalytic accessory components of the cytoplasmic dynein 1 complex that are thought to be involved in linking dynein to cargos and to adapter proteins that regulate dynein function. Cytoplasmic dynein 1 acts as a motor for the intracellular retrograde motility of vesicles and organelles along microtubules. Probably binds BUB3 as part of transport cargo. Required for the efficient progression through mitosis. This Canis lupus familiaris (Dog) protein is Dynein light chain Tctex-type 3 (DYNLT3).